Consider the following 434-residue polypeptide: Maltotriose-binding protein (434 aa).

The signal sequence occupies residues 1–20 (MRRATYAFALLAILVLGVVA). The segment at 28–52 (TTTPTQTSPATQPTTTQTPTQTETQ) is disordered. A compositionally biased stretch (low complexity) spans 29–52 (TTPTQTSPATQPTTTQTPTQTETQ).

Belongs to the bacterial solute-binding protein 1 family.

Functionally, involved in an abc transport system for maltotriose. Binds maltotriose much more tightly than maltose. This Pyrococcus furiosus (strain ATCC 43587 / DSM 3638 / JCM 8422 / Vc1) protein is Maltotriose-binding protein (malE).